A 486-amino-acid chain; its full sequence is Katanin p60 ATPase-containing subunit A1 (486 aa).

The tract at residues 103-174 is disordered; the sequence is RSSPLPVRRP…NKAEVSEKEV (72 aa). Residues 143–174 show a composition bias toward basic and acidic residues; that stretch reads NGDRAKPLKGKEKKEAKPKDDKNKAEVSEKEV. 244–251 contributes to the ATP binding site; that stretch reads GPPGTGKT.

This sequence belongs to the AAA ATPase family. Katanin p60 subunit A1 subfamily. As to quaternary structure, can homooligomerize into hexameric rings, which may be promoted by interaction with microtubules. Interacts with katnb1, which may serve as a targeting subunit.

It is found in the cytoplasm. The protein localises to the cytoskeleton. Its subcellular location is the microtubule organizing center. It localises to the centrosome. The protein resides in the spindle pole. It is found in the spindle. It carries out the reaction n ATP + n H2O + a microtubule = n ADP + n phosphate + (n+1) alpha/beta tubulin heterodimers.. Its activity is regulated as follows. ATPase activity is stimulated by microtubules, which promote homooligomerization. ATP-dependent microtubule severing is stimulated by interaction with katnb1. Its function is as follows. Catalytic subunit of a complex which severs microtubules in an ATP-dependent manner. Microtubule severing may promote rapid reorganization of cellular microtubule arrays and the release of microtubules from the centrosome following nucleation. The chain is Katanin p60 ATPase-containing subunit A1 (katna1) from Salmo salar (Atlantic salmon).